The sequence spans 198 residues: Na(+)-translocating NADH-quinone reductase subunit E (198 aa).

Transmembrane regions (helical) follow at residues 11-31 (SVFIENMALSFFLGMCTFLAV), 35-55 (VSTAFGLGVAVTVVLGISVPV), 77-97 (FLNFITFIGVIAALVQILEMI), 110-130 (GIFLPLITVNCAIFGGVSFMV), 140-160 (IVYGIGAGTGWMLAIVALAGI), and 176-196 (LGITFITVGLMALGFMSFSGV).

This sequence belongs to the NqrDE/RnfAE family. Composed of six subunits; NqrA, NqrB, NqrC, NqrD, NqrE and NqrF.

Its subcellular location is the cell inner membrane. It catalyses the reaction a ubiquinone + n Na(+)(in) + NADH + H(+) = a ubiquinol + n Na(+)(out) + NAD(+). In terms of biological role, NQR complex catalyzes the reduction of ubiquinone-1 to ubiquinol by two successive reactions, coupled with the transport of Na(+) ions from the cytoplasm to the periplasm. NqrA to NqrE are probably involved in the second step, the conversion of ubisemiquinone to ubiquinol. The protein is Na(+)-translocating NADH-quinone reductase subunit E of Histophilus somni (strain 2336) (Haemophilus somnus).